Here is a 447-residue protein sequence, read N- to C-terminus: Probable glycine dehydrogenase (decarboxylating) subunit 1 (447 aa).

It belongs to the GcvP family. N-terminal subunit subfamily. The glycine cleavage system is composed of four proteins: P, T, L and H. In this organism, the P 'protein' is a heterodimer of two subunits.

The catalysed reaction is N(6)-[(R)-lipoyl]-L-lysyl-[glycine-cleavage complex H protein] + glycine + H(+) = N(6)-[(R)-S(8)-aminomethyldihydrolipoyl]-L-lysyl-[glycine-cleavage complex H protein] + CO2. Functionally, the glycine cleavage system catalyzes the degradation of glycine. The P protein binds the alpha-amino group of glycine through its pyridoxal phosphate cofactor; CO(2) is released and the remaining methylamine moiety is then transferred to the lipoamide cofactor of the H protein. This Bacillus mycoides (strain KBAB4) (Bacillus weihenstephanensis) protein is Probable glycine dehydrogenase (decarboxylating) subunit 1.